The chain runs to 118 residues: Large ribosomal subunit protein uL18 (118 aa).

Belongs to the universal ribosomal protein uL18 family. In terms of assembly, part of the 50S ribosomal subunit; part of the 5S rRNA/L5/L18/L25 subcomplex. Contacts the 5S and 23S rRNAs.

Functionally, this is one of the proteins that bind and probably mediate the attachment of the 5S RNA into the large ribosomal subunit, where it forms part of the central protuberance. The chain is Large ribosomal subunit protein uL18 from Myxococcus xanthus (strain DK1622).